The primary structure comprises 309 residues: Ribonuclease Z (309 aa).

Zn(2+)-binding residues include His-63, His-65, Asp-67, His-68, His-145, Asp-216, and His-274. Residue Asp-67 is the Proton acceptor of the active site.

The protein belongs to the RNase Z family. As to quaternary structure, homodimer. Zn(2+) is required as a cofactor.

The catalysed reaction is Endonucleolytic cleavage of RNA, removing extra 3' nucleotides from tRNA precursor, generating 3' termini of tRNAs. A 3'-hydroxy group is left at the tRNA terminus and a 5'-phosphoryl group is left at the trailer molecule.. Its function is as follows. Zinc phosphodiesterase, which displays some tRNA 3'-processing endonuclease activity. Probably involved in tRNA maturation, by removing a 3'-trailer from precursor tRNA. The protein is Ribonuclease Z of Streptococcus pneumoniae serotype 2 (strain D39 / NCTC 7466).